Consider the following 130-residue polypeptide: Large ribosomal subunit protein bL19 (130 aa).

It belongs to the bacterial ribosomal protein bL19 family.

This protein is located at the 30S-50S ribosomal subunit interface and may play a role in the structure and function of the aminoacyl-tRNA binding site. This chain is Large ribosomal subunit protein bL19, found in Cupriavidus metallidurans (strain ATCC 43123 / DSM 2839 / NBRC 102507 / CH34) (Ralstonia metallidurans).